A 178-amino-acid chain; its full sequence is Putative metal-dependent hydrolase GK0616 (178 aa).

Positions 68, 161, and 165 each coordinate Zn(2+).

Belongs to the metal hydrolase YfiT family. Homodimer. Requires Zn(2+) as cofactor.

It localises to the cytoplasm. Possible metal-dependent hydrolase. The chain is Putative metal-dependent hydrolase GK0616 from Geobacillus kaustophilus (strain HTA426).